The chain runs to 191 residues: Protein HP-20 homolog (191 aa).

The signal sequence occupies residues 1-16 (MADLRILVSIILMTNA). Residues 22–58 (GCTGPPGPPGHPGPPGIRGPPGIRGIPGLPGPPGTPG) form the Collagen-like domain. Residues 22–61 (GCTGPPGPPGHPGPPGIRGPPGIRGIPGLPGPPGTPGPSV) are disordered. Residues 26-39 (PPGPPGHPGPPGIR) show a composition bias toward pro residues. The C1q domain occupies 64–191 (PCHRQSAFTV…VTIYFSGFLT (128 aa)).

Its subcellular location is the secreted. This chain is Protein HP-20 homolog, found in Bos taurus (Bovine).